Here is a 269-residue protein sequence, read N- to C-terminus: Tryptophan synthase alpha chain (269 aa).

Active-site proton acceptor residues include glutamate 50 and aspartate 61.

This sequence belongs to the TrpA family. In terms of assembly, tetramer of two alpha and two beta chains.

It carries out the reaction (1S,2R)-1-C-(indol-3-yl)glycerol 3-phosphate + L-serine = D-glyceraldehyde 3-phosphate + L-tryptophan + H2O. The protein operates within amino-acid biosynthesis; L-tryptophan biosynthesis; L-tryptophan from chorismate: step 5/5. Its function is as follows. The alpha subunit is responsible for the aldol cleavage of indoleglycerol phosphate to indole and glyceraldehyde 3-phosphate. The polypeptide is Tryptophan synthase alpha chain (Francisella tularensis subsp. tularensis (strain WY96-3418)).